Reading from the N-terminus, the 357-residue chain is Neutral protease 2 homolog BDCG_00922 (357 aa).

The N-terminal stretch at 1–19 (MRSPQSILAIVAFATTAIA) is a signal peptide. A propeptide spanning residues 20–182 (GVVPSTEKRA…FASLNQFSKR (163 aa)) is cleaved from the precursor. 3 disulfides stabilise this stretch: Cys-188/Cys-259, Cys-266/Cys-284, and Cys-297/Cys-357. Residue His-308 participates in Zn(2+) binding. The active site involves Glu-309. Residues His-312 and Asp-323 each contribute to the Zn(2+) site.

Belongs to the peptidase M35 family. It depends on Zn(2+) as a cofactor.

It localises to the secreted. It catalyses the reaction Preferential cleavage of bonds with hydrophobic residues in P1'. Also 3-Asn-|-Gln-4 and 8-Gly-|-Ser-9 bonds in insulin B chain.. Functionally, secreted metalloproteinase that allows assimilation of proteinaceous substrates. Shows high activities on basic nuclear substrates such as histone and protamine. The polypeptide is Neutral protease 2 homolog BDCG_00922 (Ajellomyces dermatitidis (strain ER-3 / ATCC MYA-2586) (Blastomyces dermatitidis)).